A 423-amino-acid polypeptide reads, in one-letter code: Adenylosuccinate synthetase (423 aa).

GTP-binding positions include 12-18 (GDEGKGK) and 40-42 (GHT). Asp-13 (proton acceptor) is an active-site residue. Residues Asp-13 and Gly-40 each contribute to the Mg(2+) site. Residues 13–16 (DEGK), 38–41 (NAGH), Thr-129, Arg-143, Gln-221, Thr-236, and Arg-300 each bind IMP. The active-site Proton donor is the His-41. 296-302 (SVTGRKR) contributes to the substrate binding site. Residues Arg-302, 328-330 (KSD), and 408-410 (SVG) each bind GTP.

This sequence belongs to the adenylosuccinate synthetase family. Homodimer. It depends on Mg(2+) as a cofactor.

The protein resides in the cytoplasm. It catalyses the reaction IMP + L-aspartate + GTP = N(6)-(1,2-dicarboxyethyl)-AMP + GDP + phosphate + 2 H(+). It participates in purine metabolism; AMP biosynthesis via de novo pathway; AMP from IMP: step 1/2. Plays an important role in the de novo pathway of purine nucleotide biosynthesis. Catalyzes the first committed step in the biosynthesis of AMP from IMP. This is Adenylosuccinate synthetase from Bacteroides fragilis (strain ATCC 25285 / DSM 2151 / CCUG 4856 / JCM 11019 / LMG 10263 / NCTC 9343 / Onslow / VPI 2553 / EN-2).